The following is a 222-amino-acid chain: DNA ADP-ribosyl transferase (222 aa).

In terms of domain architecture, DarT spans 12-209; the sequence is TLIYHITHLN…PVRVRRSWYY (198 aa). NAD(+) contacts are provided by residues 16-18, Gly25, and Leu33; that span reads HIT. The segment at 38–56 is NAD(+)-binding element; sequence RPPTQQNVAYGHIQAHRAQ. Residues 47–53 mediate DNA binding; it reads YGHIQAH. NAD(+) is bound at residue Arg54. Arg54 acts as the Proton acceptor in catalysis. DNA-binding regions lie at residues 78–83, 148–151, and 154–158; these read RSPMLY, SYWA, and REKKQ. An ADP-ribosylating turn-turn loop region spans residues 119 to 160; the sequence is TDRHAAVQYVCFFHKLEHLKALDWQAIQASYWANVREKKQAE. Glu160 is a catalytic residue.

This sequence belongs to the DarT ADP-ribosyltransferase family. As to quaternary structure, interacts with cognate antitoxin DarG (via C-terminus); this heterodimeric complex neutralizes the toxic effect of DarT by preventing ssDNA binding to DarT and consequently inactivating the toxin by direct protein-protein interactions.

It carries out the reaction a thymidine in DNA + NAD(+) = an N-(ADP-alpha-D-ribosyl)-thymidine in DNA + nicotinamide + H(+). Toxic component of the hybrid type II/IV toxin-antitoxin (TA) system DarTG, which plays a crucial role in controlling bacterial growth and bacteriophage infection. Its toxic effect is neutralized by cognate antitoxin DarG. In case of phage infection, DarT toxin ADP-ribosylates DNA, which inhibits both viral DNA and RNA synthesis and leads to abortive infection. ADP-ribosylates ssDNA on the second thymidine of the consensus sequence 5'-TNTC-3'; the protein does not auto-modify. Has no activity on dsDNA in vitro. This leads to a decrease in DNA replication. Upon expression in E.coli inhibits cell growth, colony formation and induces the SOS response. Expression leads to bacteriostasis; however if cells grow over an hour in the presence of toxin, growth is no longer restored on antitoxin-inducing plates. In E.coli ADP-ribosylates genomic DNA (gDNA), which induces RecA expression (a marker for DNA damage). This Thermus aquaticus (strain ATCC BAA-2747 / Y51MC23) protein is DNA ADP-ribosyl transferase.